We begin with the raw amino-acid sequence, 293 residues long: MALSLIFLALLVLCPSSGHSQRSPSPGYYPSSRVPTSPFDREFRTLWGSQHQRREQDVVTLWLDKSTGSGFKSLRPYRSGYFGASIKLQPGFTAGVDTSLYLSNNQEHPGDHDEVDIEFLGTTPGKPYSLQTNVFVRGSGDRNVIGREMKFTLWFDPTQDFHHYAILWNPNQIVFFVDDVPIRTYNRKNEAIFPTRPMWVYGSIWDASDWATENGRIKADYRYQPFVAKYKNFKLAGCTADSSSSCRPPSPAPMRNRGLSRQQMAALTWAQRNFLVYNYCHDPKRDHTQTPEC.

The first 20 residues, 1–20, serve as a signal peptide directing secretion; it reads MALSLIFLALLVLCPSSGHS. Positions 29–230 constitute a GH16 domain; sequence YPSSRVPTSP…YRYQPFVAKY (202 aa). Catalysis depends on Glu114, which acts as the Nucleophile. Glu118 functions as the Proton donor in the catalytic mechanism. Xyloglucan-binding positions include Glu118, 131 to 133, 141 to 148, and 209 to 210; these read QTN, DRNVIGRE, and DW. 2 disulfide bridges follow: Cys238–Cys246 and Cys280–Cys293. Xyloglucan is bound at residue Arg285.

The protein belongs to the glycosyl hydrolase 16 family. XTH group 3 subfamily. As to quaternary structure, interacts with XTH17. The formation of an XTH17-XTH31 dimer may be required for XET activity. Post-translationally, contains at least one intrachain disulfide bond essential for its enzymatic activity. Predominantly expressed in root. Weakly expressed in influorescence stems. Expressed in root tips and elongation zones, stems, young leaves, flowers and siliques. Expressed in root, hypocotyl, and etiolated whole seedlings.

The protein localises to the secreted. It is found in the cell wall. Its subcellular location is the extracellular space. The protein resides in the apoplast. It localises to the cell membrane. The enzyme catalyses breaks a beta-(1-&gt;4) bond in the backbone of a xyloglucan and transfers the xyloglucanyl segment on to O-4 of the non-reducing terminal glucose residue of an acceptor, which can be a xyloglucan or an oligosaccharide of xyloglucan.. It carries out the reaction xyloglucan + H2O = xyloglucan oligosaccharides.. Its function is as follows. Catalyzes xyloglucan endohydrolysis (XEH) and/or endotransglycosylation (XET). Cleaves and religates xyloglucan polymers, an essential constituent of the primary cell wall, and thereby participates in cell wall construction of growing tissues. Involved in the accumulation of hemicelluloses. Has a high XEH activity and only a slight XET activity in vitro, but the main in planta activity seems to be XET, thus controlling aluminum sensitivity. Acceptor preferences are XXXGol = XXFGol &gt; XXLGol &gt; XLLGol = XLFGol. The polypeptide is Xyloglucan endotransglucosylase/hydrolase protein 31 (Arabidopsis thaliana (Mouse-ear cress)).